Consider the following 495-residue polypeptide: 1-aminocyclopropane-1-carboxylate synthase 6 (495 aa).

Residues Glu58 and Tyr96 each contribute to the substrate site. Lys280 is modified (N6-(pyridoxal phosphate)lysine). Phosphoserine occurs at positions 480, 483, and 488.

The protein belongs to the class-I pyridoxal-phosphate-dependent aminotransferase family. Homodimer and heterodimer. In vivo, the relevance of heterodimerization with other ACS enzymes is however unsure. Interacts with GRF3. The cofactor is pyridoxal 5'-phosphate. Phosphorylated on serine residue by MAP kinase (MPK6). In terms of processing, may be processed at its C-terminus. Expressed in roots and flowers.

The catalysed reaction is S-adenosyl-L-methionine = 1-aminocyclopropane-1-carboxylate + S-methyl-5'-thioadenosine + H(+). Its pathway is alkene biosynthesis; ethylene biosynthesis via S-adenosyl-L-methionine; ethylene from S-adenosyl-L-methionine: step 1/2. Functionally, 1-aminocyclopropane-1-carboxylate synthase (ACS) enzymes catalyze the conversion of S-adenosyl-L-methionine (SAM) into 1-aminocyclopropane-1-carboxylate (ACC), a direct precursor of ethylene. Involved in bacterial flagellin-induced ethylene production. The protein is 1-aminocyclopropane-1-carboxylate synthase 6 (ACS6) of Arabidopsis thaliana (Mouse-ear cress).